We begin with the raw amino-acid sequence, 121 residues long: Protein opa (121 aa).

Belongs to the opacity porin family.

This Haemophilus influenzae (strain ATCC 51907 / DSM 11121 / KW20 / Rd) protein is Protein opa (opa).